Reading from the N-terminus, the 213-residue chain is Ribosomal RNA small subunit methyltransferase G (213 aa).

Residues glycine 77, methionine 82, 104–106 (EKS), and arginine 145 each bind S-adenosyl-L-methionine.

This sequence belongs to the methyltransferase superfamily. RNA methyltransferase RsmG family.

It is found in the cytoplasm. The enzyme catalyses guanosine(527) in 16S rRNA + S-adenosyl-L-methionine = N(7)-methylguanosine(527) in 16S rRNA + S-adenosyl-L-homocysteine. In terms of biological role, specifically methylates the N7 position of guanine in position 527 of 16S rRNA. This Pelagibacter ubique (strain HTCC1062) protein is Ribosomal RNA small subunit methyltransferase G.